The sequence spans 63 residues: Omega-conotoxin Eu1.6 (63 aa).

The first 21 residues, 1–21, serve as a signal peptide directing secretion; it reads MGMRMMFTVFLLVVLATTVVS. A propeptide spanning residues 22–47 is cleaved from the precursor; sequence FTSDRAPDGRNAAAKAFGLITPTVRK. Intrachain disulfides connect Cys-49/Cys-55 and Cys-50/Cys-63. The interval 51-53 is ser-Xaa-Pro motif, crucial for potent interaction with nAChR; it reads SNP.

It belongs to the conotoxin A superfamily. In terms of tissue distribution, expressed by the venom duct.

It is found in the secreted. Functionally, this amidated peptide potently and teversibly inhibits Cav2.2/CACNA1B. Steady-state inactivation is enhanced at hyperpolarized membrane potentials. Also shows a weak interaction at alpha-3-beta-4/ CHRNA3-CHRNB4 and alpha-7/CHRNA7 nAChRs subtypes. In vivo, exhibits a potent analgesic activity in rat partial sciatic nerve injury and chronic constriction injury models. This is Omega-conotoxin Eu1.6 from Conus eburneus (Ivory cone).